We begin with the raw amino-acid sequence, 524 residues long: Probable endopeptidase p60 (524 aa).

An N-terminal signal peptide occupies residues 1–27 (MNMKKATIAATAGIAVTAFAAPTIASA). Positions 28–71 (STVVVEAGDTLWGIAQSKGTTVDALKKANNLTSDKIVPGQKLQV) constitute a LysM 1 domain. An SH3b domain is found at 78-142 (KTEKSVSATW…VNGKYLGDAV (65 aa)). A disordered region spans residues 150 to 188 (QEVKQETTKQTAPAAETKTEVKQSTPAPTAPKAAETKTA). Over residues 174–188 (TPAPTAPKAAETKTA) the composition is skewed to low complexity. Residues 196 to 239 (TTHTVKSGDTIWALSVKYGASVQDLMSWNNLSSSSIYVGQKIAV) form the LysM 2 domain. Positions 272-299 (NTNTTVKKEVTTQTQTNTTKAPAQAAKP) are enriched in low complexity. Residues 272–313 (NTNTTVKKEVTTQTQTNTTKAPAQAAKPAPAPAPAPTVNTNA) form a disordered region. The region spanning 314–357 (STYTVKSGDSLSKIANTFGTSVSKIKALNNLTSDNLQVGTVLKV) is the LysM 3 domain. The interval 360-408 (TVPTTNTNNNSNTTAPTTNTSNNNTSSNTSTPSKNTNTNTNQGSSNSAS) is disordered. Residues 362–408 (PTTNTNNNSNTTAPTTNTSNNNTSSNTSTPSKNTNTNTNQGSSNSAS) show a composition bias toward low complexity. The NlpC/P60 domain occupies 406 to 524 (SASASALIAE…GKYLVGFGRV (119 aa)). Cys-436 (nucleophile) is an active-site residue. His-486 functions as the Proton acceptor in the catalytic mechanism. Asn-498 is an active-site residue.

The protein belongs to the peptidase C40 family.

Its function is as follows. This major extracellular protein may be involved in the invasion of non-professional phagocytic cells by Listeria. This chain is Probable endopeptidase p60 (iap), found in Listeria welshimeri.